Consider the following 73-residue polypeptide: DNA-directed RNA polymerase subunit Rpo10 (73 aa).

Positions 7, 10, 44, and 45 each coordinate Zn(2+).

The protein belongs to the archaeal Rpo10/eukaryotic RPB10 RNA polymerase subunit family. In terms of assembly, part of the RNA polymerase complex. Forms an Rpo3-Rpo10-Rpo11-Rpo12 complex upon coexpression. The cofactor is Zn(2+).

The protein resides in the cytoplasm. The enzyme catalyses RNA(n) + a ribonucleoside 5'-triphosphate = RNA(n+1) + diphosphate. Its function is as follows. DNA-dependent RNA polymerase (RNAP) catalyzes the transcription of DNA into RNA using the four ribonucleoside triphosphates as substrates. The chain is DNA-directed RNA polymerase subunit Rpo10 from Methanocaldococcus jannaschii (strain ATCC 43067 / DSM 2661 / JAL-1 / JCM 10045 / NBRC 100440) (Methanococcus jannaschii).